Consider the following 204-residue polypeptide: MKRFGIIGGTFDPIHNAHLYIAYEAKEKLSLDEVIFMPAGIQPLKANNIITDPGLRYSMVKAAIEHFSEFSVSDYEIEKGGLSFTHETLEYFKNKISDRDKDNELFFITGADCLFSMEKWKEVKKIFSLATLVVFSRGGINKSDMINRKHMIEEKYNGKIIVLDLKELEISSTDIRNRVHENKRIDFFVPERVSDIIYKNRLYR.

It belongs to the NadD family.

The enzyme catalyses nicotinate beta-D-ribonucleotide + ATP + H(+) = deamido-NAD(+) + diphosphate. It participates in cofactor biosynthesis; NAD(+) biosynthesis; deamido-NAD(+) from nicotinate D-ribonucleotide: step 1/1. Its function is as follows. Catalyzes the reversible adenylation of nicotinate mononucleotide (NaMN) to nicotinic acid adenine dinucleotide (NaAD). In Clostridium beijerinckii (strain ATCC 51743 / NCIMB 8052) (Clostridium acetobutylicum), this protein is Probable nicotinate-nucleotide adenylyltransferase.